A 440-amino-acid chain; its full sequence is Protein eva-1 homolog C (440 aa).

Residues 1–13 show a composition bias toward pro residues; the sequence is MLLPGHPRPPPAP. The disordered stretch occupies residues 1 to 23; it reads MLLPGHPRPPPAPQSAQNQGLRR. The first 48 residues, 1–48, serve as a signal peptide directing secretion; the sequence is MLLPGHPRPPPAPQSAQNQGLRRQVEPPGQLLRLFYCTVLVCSKETSA. The Extracellular portion of the chain corresponds to 49–321; the sequence is LTDFSGYLTK…AYIRAHPERA (273 aa). N-linked (GlcNAc...) asparagine glycosylation is found at Asn62, Asn109, and Asn165. One can recognise an SUEL-type lectin 1 domain in the interval 67–159; it reads ACDGDYLNLQ…KYLLVSFKCQ (93 aa). The SUEL-type lectin 2 domain occupies 168 to 260; the sequence is VCENQELKLH…KYLTVAYACV (93 aa). Residues 322–342 traverse the membrane as a helical segment; the sequence is ALLFMSSVCIGLLLTLCALVI. Over 343 to 440 the chain is Cytoplasmic; sequence RVSCTKDFRE…SLPRNVGHFY (98 aa). Residues 364 to 384 form a disordered region; the sequence is SDKAEEDSEEDLEEEDSSDSQ. The segment covering 367–381 has biased composition (acidic residues); the sequence is AEEDSEEDLEEEDSS.

Belongs to the EVA1 family. As to expression, ubiquitous.

Its subcellular location is the cell membrane. Binds heparin. The protein is Protein eva-1 homolog C (Eva1c) of Mus musculus (Mouse).